The chain runs to 103 residues: Cyanovirin-N homolog (103 aa).

The protein belongs to the cyanovirin-N family.

In terms of biological role, mannose-binding lectin. In Tuber borchii (White truffle), this protein is Cyanovirin-N homolog.